The sequence spans 1477 residues: FHA domain-containing protein PS1 (1477 aa).

An FHA domain is found at 64–115 (LVVGRHPDCDILLTHPSISRFHLEIRSISSRQKLFVTDLSSVHGTWVRDLRI). Disordered stretches follow at residues 188–218 (ENTT…DEDT), 588–644 (LGKA…PKSF), 789–818 (PNSF…DSEF), 832–911 (LNQK…LIGS), 942–979 (ALAA…RDDV), 1004–1030 (IRTN…KQAL), and 1159–1225 (VEQE…IRSS). A compositionally biased stretch (basic and acidic residues) spans 589 to 607 (GKADIRSHEENGESEDSRQ). Positions 832–849 (LNQKRNGETKVSSRQASP) are enriched in polar residues. Low complexity predominate over residues 870-883 (QSLCSSSQPPSESE). Polar residues-rich tracts occupy residues 885–897 (NPAT…SGII), 957–971 (LSSS…QTPE), 1007–1018 (NKSQGKQKQTGR), and 1198–1212 (SSFQ…SSTA). The segment covering 1213-1225 (SARNNISRGIRSS) has biased composition (low complexity).

Functionally, required for normal spindle orientation at male meiosis II and normal formation of tetrad of microspores. Not involved in female meiosis. This is FHA domain-containing protein PS1 from Arabidopsis thaliana (Mouse-ear cress).